We begin with the raw amino-acid sequence, 258 residues long: L-rhamnose-1-dehydrogenase (258 aa).

NADP(+) is bound by residues I19, D68, and N95. Catalysis depends on proton donor residues S147 and Y161. NADP(+) contacts are provided by Y161, K165, I194, and T196. Catalysis depends on K165, which acts as the Lowers pKa of active site Tyr.

This sequence belongs to the short-chain dehydrogenases/reductases (SDR) family.

It carries out the reaction L-rhamnofuranose + NAD(+) = L-rhamnono-1,4-lactone + NADH + H(+). Functionally, NAD-dependent dehydrogenase that has high activity with L-rhamnose and L-lyxose, and shows only low activity with L-mannose. Has no activity with NADP. Catalyzes the first step in an alternative pathway for rhamnose utilization that does not involve phosphorylated intermediates. This chain is L-rhamnose-1-dehydrogenase (DHG2), found in Scheffersomyces stipitis (strain ATCC 58785 / CBS 6054 / NBRC 10063 / NRRL Y-11545) (Yeast).